The following is a 478-amino-acid chain: UDP-N-acetylmuramate--L-alanine ligase (478 aa).

An ATP-binding site is contributed by 126–132 (GTHGKTT).

This sequence belongs to the MurCDEF family.

Its subcellular location is the cytoplasm. The catalysed reaction is UDP-N-acetyl-alpha-D-muramate + L-alanine + ATP = UDP-N-acetyl-alpha-D-muramoyl-L-alanine + ADP + phosphate + H(+). It participates in cell wall biogenesis; peptidoglycan biosynthesis. In terms of biological role, cell wall formation. The chain is UDP-N-acetylmuramate--L-alanine ligase from Mycolicibacterium vanbaalenii (strain DSM 7251 / JCM 13017 / BCRC 16820 / KCTC 9966 / NRRL B-24157 / PYR-1) (Mycobacterium vanbaalenii).